A 136-amino-acid polypeptide reads, in one-letter code: NADH-quinone oxidoreductase subunit A (136 aa).

Helical transmembrane passes span 20–40 (LAVY…VAWW), 70–90 (VPFY…AYIL), and 99–119 (LGWA…VGLV).

It belongs to the complex I subunit 3 family. As to quaternary structure, NDH-1 is composed of 14 different subunits. Subunits NuoA, H, J, K, L, M, N constitute the membrane sector of the complex.

It localises to the cell inner membrane. The catalysed reaction is a quinone + NADH + 5 H(+)(in) = a quinol + NAD(+) + 4 H(+)(out). Functionally, NDH-1 shuttles electrons from NADH, via FMN and iron-sulfur (Fe-S) centers, to quinones in the respiratory chain. The immediate electron acceptor for the enzyme in this species is believed to be ubiquinone. Couples the redox reaction to proton translocation (for every two electrons transferred, four hydrogen ions are translocated across the cytoplasmic membrane), and thus conserves the redox energy in a proton gradient. The sequence is that of NADH-quinone oxidoreductase subunit A from Syntrophobacter fumaroxidans (strain DSM 10017 / MPOB).